We begin with the raw amino-acid sequence, 359 residues long: tRNA-specific 2-thiouridylase MnmA (359 aa).

ATP is bound by residues 6-13 (AMSGGVDS) and leucine 32. The active-site Nucleophile is cysteine 101. Cysteine 101 and cysteine 193 form a disulfide bridge. Glycine 125 serves as a coordination point for ATP. The interval 143–145 (KDQ) is interaction with tRNA. Residue cysteine 193 is the Cysteine persulfide intermediate of the active site.

This sequence belongs to the MnmA/TRMU family.

The protein localises to the cytoplasm. The enzyme catalyses S-sulfanyl-L-cysteinyl-[protein] + uridine(34) in tRNA + AH2 + ATP = 2-thiouridine(34) in tRNA + L-cysteinyl-[protein] + A + AMP + diphosphate + H(+). Its function is as follows. Catalyzes the 2-thiolation of uridine at the wobble position (U34) of tRNA, leading to the formation of s(2)U34. This is tRNA-specific 2-thiouridylase MnmA from Mycobacterium sp. (strain KMS).